Here is a 202-residue protein sequence, read N- to C-terminus: uncharacterized protein (202 aa).

Residues 118 to 202 (SSVSPVSSKK…KVSGTKKVKA (85 aa)) are disordered. The residue at position 121 (serine 121) is a Phosphoserine. Basic residues-rich tracts occupy residues 142-163 (EKSK…KSKR) and 186-202 (SSKS…KVKA).

It is found in the nucleus. The protein localises to the nucleolus. This is an uncharacterized protein from Schizosaccharomyces pombe (strain 972 / ATCC 24843) (Fission yeast).